The primary structure comprises 168 residues: Ribosome maturation factor RimM (168 aa).

Positions 95–166 (EHEFYYSDII…RIQITPMEGL (72 aa)) constitute a PRC barrel domain.

This sequence belongs to the RimM family. Binds ribosomal protein uS19.

Its subcellular location is the cytoplasm. Functionally, an accessory protein needed during the final step in the assembly of 30S ribosomal subunit, possibly for assembly of the head region. Essential for efficient processing of 16S rRNA. May be needed both before and after RbfA during the maturation of 16S rRNA. It has affinity for free ribosomal 30S subunits but not for 70S ribosomes. This chain is Ribosome maturation factor RimM, found in Staphylococcus saprophyticus subsp. saprophyticus (strain ATCC 15305 / DSM 20229 / NCIMB 8711 / NCTC 7292 / S-41).